The following is an 84-amino-acid chain: Large ribosomal subunit protein bL31B (84 aa).

It belongs to the bacterial ribosomal protein bL31 family. Type B subfamily. Part of the 50S ribosomal subunit.

The sequence is that of Large ribosomal subunit protein bL31B from Staphylococcus aureus (strain Mu3 / ATCC 700698).